A 261-amino-acid chain; its full sequence is Phosphatidylglycerol--prolipoprotein diacylglyceryl transferase (261 aa).

4 consecutive transmembrane segments (helical) span residues 12-32, 41-61, 87-107, and 112-132; these read ISIRWYAICIVTGLVLAVYLA, IIPDDILDFILVAFPVAIVGA, GIAGIAIYGGLIAGAIVLYFF, and LIHPVDFLDIAAPSVMIAQSI. Position 134 (Arg134) interacts with a 1,2-diacyl-sn-glycero-3-phospho-(1'-sn-glycerol). 3 helical membrane-spanning segments follow: residues 170–190, 200–220, and 229–249; these read QPTFLYESVWNLIGFILIIVL, GEIAAFYLIWYGFGRMIIEGM, and GLRVSQWLSLILIFVGIGIII.

This sequence belongs to the Lgt family.

The protein localises to the cell membrane. The enzyme catalyses L-cysteinyl-[prolipoprotein] + a 1,2-diacyl-sn-glycero-3-phospho-(1'-sn-glycerol) = an S-1,2-diacyl-sn-glyceryl-L-cysteinyl-[prolipoprotein] + sn-glycerol 1-phosphate + H(+). The protein operates within protein modification; lipoprotein biosynthesis (diacylglyceryl transfer). In terms of biological role, catalyzes the transfer of the diacylglyceryl group from phosphatidylglycerol to the sulfhydryl group of the N-terminal cysteine of a prolipoprotein, the first step in the formation of mature lipoproteins. This is Phosphatidylglycerol--prolipoprotein diacylglyceryl transferase from Streptococcus sanguinis (strain SK36).